Consider the following 1367-residue polypeptide: Protein patched homolog 3 (1367 aa).

Over 1–97 (MSFPDEETDL…WLFRIGCFVQ (97 aa)) the chain is Cytoplasmic. Residues 98-118 (RWAWSTIFISLFLYCLCLGGL) traverse the membrane as a helical segment. The Extracellular segment spans residues 119–625 (RHVTIETDLV…IADMLEEFSQ (507 aa)). N-linked (GlcNAc...) asparagine glycans are attached at residues asparagine 235, asparagine 310, asparagine 454, and asparagine 591. A helical transmembrane segment spans residues 626-646 (FNYIIIVIGYILMVIYAAFTQ). Residues 627-788 (NYIIIVIGYI…MFIFPAMIGI (162 aa)) enclose the SSD domain. At 647-659 (GRFQGWWLAVQSN) the chain is on the cytoplasmic side. The chain crosses the membrane as a helical span at residues 660 to 680 (VALAICGVILVTISSICGLGF). The Extracellular portion of the chain corresponds to 681–694 (ATHLGINFNAATTQ). A helical transmembrane segment spans residues 695 to 715 (VVPFLSLGLGIDDMFLLLHNY). Residues 716–737 (DEIINICNKNEIGVLLKETGMS) are Cytoplasmic-facing. A helical transmembrane segment spans residues 738–758 (VMLTSINNILAFISGYVLPIP). At 759-767 (ALRSFCSQT) the chain is on the extracellular side. Residues 768–788 (AILLAFNLIFLMFIFPAMIGI) traverse the membrane as a helical segment. The Cytoplasmic segment spans residues 789–863 (DLRRQRKGKR…KIYIPALKNN (75 aa)). Residues 864-884 (VVKACVLIGTTTAVVFGLYGM) traverse the membrane as a helical segment. The Extracellular segment spans residues 885–1143 (YTSTLGLELA…WEQYLTLRWN (259 aa)). Residues 1144–1164 (LFQAICIIALAVFCVISILMF) traverse the membrane as a helical segment. Topologically, residues 1165–1171 (NPWAATL) are cytoplasmic. Residues 1172 to 1192 (IMCIVVITTIELGGFMGLMGI) traverse the membrane as a helical segment. Residues 1193-1199 (KMNPISA) lie on the Extracellular side of the membrane. A helical transmembrane segment spans residues 1200 to 1220 (VTLICAVGIGVEFTAHVELAF). The Cytoplasmic portion of the chain corresponds to 1221 to 1237 (LTALGTIDQRLESCLQH). A helical transmembrane segment spans residues 1238–1258 (MFVPVYHGAISTFLGVVMLVF). The Extracellular portion of the chain corresponds to 1259 to 1273 (SEFDFVVTYFFYTMT). A helical membrane pass occupies residues 1274–1294 (LLVALGVFNGLCVLPVILTLV). Over 1295-1367 (GPKPELTPTD…SDDESSPAHK (73 aa)) the chain is Cytoplasmic. Positions 1302–1367 (PTDGSSVLPP…SDDESSPAHK (66 aa)) are disordered. The segment covering 1346-1356 (RDSPSTSSASH) has biased composition (low complexity).

This sequence belongs to the patched family. In males, expressed in the precursor and mature sensory rays, the cloaca, and pre-anal ganglia and cephalic neurons. Also expressed in five cells in the valve region between the seminal vesicle and vas deferens of the somatic gonad.

The protein resides in the apical cell membrane. It is found in the cell junction. Its subcellular location is the adherens junction. In terms of biological role, regulates osmosis during embryonic development. Required for larval development and in particular is involved in larval molting. The chain is Protein patched homolog 3 from Caenorhabditis elegans.